A 250-amino-acid chain; its full sequence is Pyrroloquinoline-quinone synthase (250 aa).

Belongs to the PqqC family.

The catalysed reaction is 6-(2-amino-2-carboxyethyl)-7,8-dioxo-1,2,3,4,7,8-hexahydroquinoline-2,4-dicarboxylate + 3 O2 = pyrroloquinoline quinone + 2 H2O2 + 2 H2O + H(+). It functions in the pathway cofactor biosynthesis; pyrroloquinoline quinone biosynthesis. Its function is as follows. Ring cyclization and eight-electron oxidation of 3a-(2-amino-2-carboxyethyl)-4,5-dioxo-4,5,6,7,8,9-hexahydroquinoline-7,9-dicarboxylic-acid to PQQ. The protein is Pyrroloquinoline-quinone synthase of Xanthomonas oryzae pv. oryzae (strain MAFF 311018).